A 533-amino-acid chain; its full sequence is Tyrosine protein-kinase src-1 (533 aa).

Glycine 2 is lipidated: N-myristoyl glycine. Residues 71–132 form the SH3 domain; that stretch reads QERETLVALY…PRNFVAKQQT (62 aa). Positions 138-237 constitute an SH2 domain; it reads WYAGKIPRNR…GLCCQLTFPA (100 aa). The Protein kinase domain occupies 262-521; it reads LHLKRKLGDG…TLYHFFDDYF (260 aa). Residues 268-276 and lysine 290 each bind ATP; that span reads LGDGNFGEV. Aspartate 381 functions as the Proton acceptor in the catalytic mechanism. Tyrosine 416 is modified (phosphotyrosine; by autocatalysis). Tyrosine 528 bears the Phosphotyrosine mark.

The protein belongs to the protein kinase superfamily. Tyr protein kinase family. SRC subfamily. As to quaternary structure, interacts (via SH2 domain and SH3 domain) with unc-5 (via cytoplasmic domain); the interaction requires kinase activity. Interacts (when activated and phosphorylated at 'Tyr-416') with ina-1 (via cytoplasmic domain) and with ced-2 (via SH2 domain). The cofactor is Mg(2+). Mn(2+) is required as a cofactor. Post-translationally, may be phosphorylated on Tyr-528 by csk-1. As to expression, expressed in some neurons (ASE, ADF, AVA, AUA, RMDV and BAG) in the head region, anchor cell, vulva, cells around anus, body wall muscle, pharyngeal muscles in procorpus and metacorpus. Expressed in gonadal distal tip cells.

It localises to the cell membrane. It is found in the cell projection. The protein localises to the phagocytic cup. It catalyses the reaction L-tyrosyl-[protein] + ATP = O-phospho-L-tyrosyl-[protein] + ADP + H(+). Its activity is regulated as follows. May be activated by autophosphorylation. May be inhibited by csk-1-mediated phosphorylation. Functionally, non-receptor tyrosine-protein kinase which plays a role in endoderm development by controlling spindle orientation in EMS blastomere, probably downstream of receptor mes-1. Also involved in embryonic body morphogenesis, especially in the formation of the pharynx and the intestine. May be dispensable for pharyngeal muscle organization in the adult. Probably phosphorylates netrin receptor unc-5, to regulate distal tip cell (DTC) migration during gonad development and in axon repulsion. Plays a role in the migration of the QR neuroblast, a precursor of the AVM neuron, and in the migration of the axon cone of AVM, ALM, CAN and PVM neurons. May act downstream of migratory protein mig-13 to control AVM neuron migration. Probably downstream of integrin ina-1/pat-3, plays a role in the clearance of apoptotic cells during mid-embryogenesis. Phosphorylates ced-1 at 'Tyr-1019' which promotes ced-1 proteasomal degradation, maintaining appropriate ced-1 levels for apoptotic cell clearance. The chain is Tyrosine protein-kinase src-1 from Caenorhabditis elegans.